A 372-amino-acid polypeptide reads, in one-letter code: 4-hydroxy-3-methylbut-2-en-1-yl diphosphate synthase (flavodoxin) (372 aa).

Residues C270, C273, C305, and E312 each contribute to the [4Fe-4S] cluster site.

Belongs to the IspG family. It depends on [4Fe-4S] cluster as a cofactor.

The catalysed reaction is (2E)-4-hydroxy-3-methylbut-2-enyl diphosphate + oxidized [flavodoxin] + H2O + 2 H(+) = 2-C-methyl-D-erythritol 2,4-cyclic diphosphate + reduced [flavodoxin]. Its pathway is isoprenoid biosynthesis; isopentenyl diphosphate biosynthesis via DXP pathway; isopentenyl diphosphate from 1-deoxy-D-xylulose 5-phosphate: step 5/6. Converts 2C-methyl-D-erythritol 2,4-cyclodiphosphate (ME-2,4cPP) into 1-hydroxy-2-methyl-2-(E)-butenyl 4-diphosphate. The polypeptide is 4-hydroxy-3-methylbut-2-en-1-yl diphosphate synthase (flavodoxin) (Aliivibrio salmonicida (strain LFI1238) (Vibrio salmonicida (strain LFI1238))).